We begin with the raw amino-acid sequence, 95 residues long: Aspartyl/glutamyl-tRNA(Asn/Gln) amidotransferase subunit C (95 aa).

Belongs to the GatC family. As to quaternary structure, heterotrimer of A, B and C subunits.

It carries out the reaction L-glutamyl-tRNA(Gln) + L-glutamine + ATP + H2O = L-glutaminyl-tRNA(Gln) + L-glutamate + ADP + phosphate + H(+). The enzyme catalyses L-aspartyl-tRNA(Asn) + L-glutamine + ATP + H2O = L-asparaginyl-tRNA(Asn) + L-glutamate + ADP + phosphate + 2 H(+). Its function is as follows. Allows the formation of correctly charged Asn-tRNA(Asn) or Gln-tRNA(Gln) through the transamidation of misacylated Asp-tRNA(Asn) or Glu-tRNA(Gln) in organisms which lack either or both of asparaginyl-tRNA or glutaminyl-tRNA synthetases. The reaction takes place in the presence of glutamine and ATP through an activated phospho-Asp-tRNA(Asn) or phospho-Glu-tRNA(Gln). The polypeptide is Aspartyl/glutamyl-tRNA(Asn/Gln) amidotransferase subunit C (Dehalococcoides mccartyi (strain ATCC BAA-2100 / JCM 16839 / KCTC 5957 / BAV1)).